We begin with the raw amino-acid sequence, 713 residues long: DNA polymerase eta (713 aa).

Positions 9-259 (VALVDMDCFF…MPIRKIRSLG (251 aa)) constitute a UmuC domain. Mg(2+)-binding residues include Asp13 and Met14. The Mn(2+) site is built by Asp13 and Met14. Residue Arg61 coordinates a 2'-deoxyribonucleoside 5'-triphosphate. Mg(2+)-binding residues include Asp115 and Glu116. Asp115 and Glu116 together coordinate Mn(2+). Disordered stretches follow at residues 441 to 472 (TSFL…AVTA) and 495 to 527 (EASL…QSTG). Polar residues-rich tracts occupy residues 456–466 (VTSSEAKTQGS) and 497–527 (SLSS…QSTG). A UBZ3-type zinc finger spans residues 628–662 (AAEDQVPCEKCGSLVPVWDMPEHMDYHFALELQKS). Residues Cys635, Cys638, His650, and His654 each coordinate Zn(2+). Residues 677–705 (VSHQGKRNPKSPLACTNKRPRPEGMQTLE) form a disordered region. Glycyl lysine isopeptide (Lys-Gly) (interchain with G-Cter in ubiquitin) cross-links involve residues Lys682, Lys686, and Lys694. The PIP-box signature appears at 701 to 708 (MQTLESFF). Lys709 is covalently cross-linked (Glycyl lysine isopeptide (Lys-Gly) (interchain with G-Cter in ubiquitin)).

It belongs to the DNA polymerase type-Y family. As to quaternary structure, interacts with REV1. Interacts with monoubiquitinated PCNA, but not unmodified PCNA. Interacts with POLI; this interaction targets POLI to the replication machinery. Interacts with PALB2 and BRCA2; the interactions are direct and are required to sustain the recruitment of POLH at blocked replication forks and to stimulate POLH-dependent DNA synthesis on D loop substrates. Interacts (via C-terminus) with TRAIP. Interacts with ubiquitin. Interacts with POLDIP2. It depends on Mg(2+) as a cofactor. Mn(2+) serves as cofactor. Monoubiquitinated by RCHY1/PIRH2. Ubiquitination depends on integrity of the UBZ3-type zinc finger domain and is enhanced by TRAIP. Ubiquitination inhibits the ability of PolH to interact with PCNA and to bypass UV-induced lesions.

The protein localises to the nucleus. It carries out the reaction DNA(n) + a 2'-deoxyribonucleoside 5'-triphosphate = DNA(n+1) + diphosphate. Its activity is regulated as follows. The enzyme in complex with the DNA substrate binds a third divalent metal cation. The binding of this third divalent cation, which is coordinated by water molecules and two oxygen atoms from DNA and dNTP, is essential for catalyzing the DNA synthesis. In terms of biological role, DNA polymerase specifically involved in the DNA repair by translesion synthesis (TLS). Due to low processivity on both damaged and normal DNA, cooperates with the heterotetrameric (REV3L, REV7, POLD2 and POLD3) POLZ complex for complete bypass of DNA lesions. Inserts one or 2 nucleotide(s) opposite the lesion, the primer is further extended by the tetrameric POLZ complex. In the case of 1,2-intrastrand d(GpG)-cisplatin cross-link, inserts dCTP opposite the 3' guanine. Particularly important for the repair of UV-induced pyrimidine dimers. Although inserts the correct base, may cause base transitions and transversions depending upon the context. May play a role in hypermutation at immunoglobulin genes. Forms a Schiff base with 5'-deoxyribose phosphate at abasic sites, but does not have any lyase activity, preventing the release of the 5'-deoxyribose phosphate (5'-dRP) residue. This covalent trapping of the enzyme by the 5'-dRP residue inhibits its DNA synthetic activity during base excision repair, thereby avoiding high incidence of mutagenesis. Targets POLI to replication foci. The sequence is that of DNA polymerase eta (POLH) from Homo sapiens (Human).